Here is a 512-residue protein sequence, read N- to C-terminus: Bifunctional purine biosynthesis protein PurH (512 aa).

Residues 1–144 (MKRALVSVSD…KNYRDVVVVV (144 aa)) enclose the MGS-like domain.

This sequence belongs to the PurH family.

It catalyses the reaction (6R)-10-formyltetrahydrofolate + 5-amino-1-(5-phospho-beta-D-ribosyl)imidazole-4-carboxamide = 5-formamido-1-(5-phospho-D-ribosyl)imidazole-4-carboxamide + (6S)-5,6,7,8-tetrahydrofolate. It carries out the reaction IMP + H2O = 5-formamido-1-(5-phospho-D-ribosyl)imidazole-4-carboxamide. It participates in purine metabolism; IMP biosynthesis via de novo pathway; 5-formamido-1-(5-phospho-D-ribosyl)imidazole-4-carboxamide from 5-amino-1-(5-phospho-D-ribosyl)imidazole-4-carboxamide (10-formyl THF route): step 1/1. It functions in the pathway purine metabolism; IMP biosynthesis via de novo pathway; IMP from 5-formamido-1-(5-phospho-D-ribosyl)imidazole-4-carboxamide: step 1/1. This Ligilactobacillus salivarius (strain UCC118) (Lactobacillus salivarius) protein is Bifunctional purine biosynthesis protein PurH.